Reading from the N-terminus, the 354-residue chain is Uroporphyrinogen decarboxylase (354 aa).

Residues 27–31 (RQAGR), aspartate 77, tyrosine 153, threonine 208, and histidine 326 contribute to the substrate site.

Belongs to the uroporphyrinogen decarboxylase family. Homodimer.

It is found in the cytoplasm. The enzyme catalyses uroporphyrinogen III + 4 H(+) = coproporphyrinogen III + 4 CO2. It participates in porphyrin-containing compound metabolism; protoporphyrin-IX biosynthesis; coproporphyrinogen-III from 5-aminolevulinate: step 4/4. In terms of biological role, catalyzes the decarboxylation of four acetate groups of uroporphyrinogen-III to yield coproporphyrinogen-III. In Neisseria meningitidis serogroup C (strain 053442), this protein is Uroporphyrinogen decarboxylase.